The chain runs to 521 residues: NAD(P)H-quinone oxidoreductase subunit 2 (521 aa).

14 helical membrane passes run 15 to 35 (ILPE…DITF), 42 to 62 (WTPY…YTQW), 79 to 99 (LSIV…LMSV), 109 to 126 (IGEF…AMFL), 131 to 153 (ELVM…TGYM), 167 to 187 (LLIG…LYGL), 208 to 228 (LALV…IAAV), 242 to 262 (PTPV…ALAI), 276 to 296 (WQFI…VVAI), 304 to 324 (MLAY…VIGT), 332 to 352 (VFYL…VILF), 376 to 396 (LALS…GFFG), 398 to 418 (LYLF…LGLI), and 464 to 484 (VGLV…NPLL).

This sequence belongs to the complex I subunit 2 family. As to quaternary structure, NDH-1 can be composed of about 15 different subunits; different subcomplexes with different compositions have been identified which probably have different functions.

The protein localises to the cellular thylakoid membrane. The enzyme catalyses a plastoquinone + NADH + (n+1) H(+)(in) = a plastoquinol + NAD(+) + n H(+)(out). It catalyses the reaction a plastoquinone + NADPH + (n+1) H(+)(in) = a plastoquinol + NADP(+) + n H(+)(out). In terms of biological role, NDH-1 shuttles electrons from an unknown electron donor, via FMN and iron-sulfur (Fe-S) centers, to quinones in the respiratory and/or the photosynthetic chain. The immediate electron acceptor for the enzyme in this species is believed to be plastoquinone. Couples the redox reaction to proton translocation, and thus conserves the redox energy in a proton gradient. Cyanobacterial NDH-1 also plays a role in inorganic carbon-concentration. The sequence is that of NAD(P)H-quinone oxidoreductase subunit 2 from Acaryochloris marina (strain MBIC 11017).